We begin with the raw amino-acid sequence, 518 residues long: Glutamate--cysteine ligase (518 aa).

This sequence belongs to the glutamate--cysteine ligase type 1 family. Type 1 subfamily.

It catalyses the reaction L-cysteine + L-glutamate + ATP = gamma-L-glutamyl-L-cysteine + ADP + phosphate + H(+). The protein operates within sulfur metabolism; glutathione biosynthesis; glutathione from L-cysteine and L-glutamate: step 1/2. The polypeptide is Glutamate--cysteine ligase (Klebsiella pneumoniae subsp. pneumoniae (strain ATCC 700721 / MGH 78578)).